A 425-amino-acid chain; its full sequence is Glutamyl-tRNA reductase (425 aa).

Residues 49–52, Ser107, 112–114, and Gln118 each bind substrate; these read TCNR and EPQ. The Nucleophile role is filled by Cys50. 187–192 is a binding site for NADP(+); the sequence is GAGETI.

It belongs to the glutamyl-tRNA reductase family. As to quaternary structure, homodimer.

The catalysed reaction is (S)-4-amino-5-oxopentanoate + tRNA(Glu) + NADP(+) = L-glutamyl-tRNA(Glu) + NADPH + H(+). Its pathway is porphyrin-containing compound metabolism; protoporphyrin-IX biosynthesis; 5-aminolevulinate from L-glutamyl-tRNA(Glu): step 1/2. Catalyzes the NADPH-dependent reduction of glutamyl-tRNA(Glu) to glutamate 1-semialdehyde (GSA). The polypeptide is Glutamyl-tRNA reductase (Pseudomonas syringae pv. syringae (strain B728a)).